The following is a 550-amino-acid chain: 2-succinyl-5-enolpyruvyl-6-hydroxy-3-cyclohexene-1-carboxylate synthase (550 aa).

It belongs to the TPP enzyme family. MenD subfamily. In terms of assembly, homodimer. Mg(2+) is required as a cofactor. Mn(2+) serves as cofactor. It depends on thiamine diphosphate as a cofactor.

The enzyme catalyses isochorismate + 2-oxoglutarate + H(+) = 5-enolpyruvoyl-6-hydroxy-2-succinyl-cyclohex-3-ene-1-carboxylate + CO2. The protein operates within quinol/quinone metabolism; 1,4-dihydroxy-2-naphthoate biosynthesis; 1,4-dihydroxy-2-naphthoate from chorismate: step 2/7. It functions in the pathway quinol/quinone metabolism; menaquinone biosynthesis. Catalyzes the thiamine diphosphate-dependent decarboxylation of 2-oxoglutarate and the subsequent addition of the resulting succinic semialdehyde-thiamine pyrophosphate anion to isochorismate to yield 2-succinyl-5-enolpyruvyl-6-hydroxy-3-cyclohexene-1-carboxylate (SEPHCHC). The polypeptide is 2-succinyl-5-enolpyruvyl-6-hydroxy-3-cyclohexene-1-carboxylate synthase (Flavobacterium psychrophilum (strain ATCC 49511 / DSM 21280 / CIP 103535 / JIP02/86)).